The chain runs to 431 residues: Trigger factor (431 aa).

A PPIase FKBP-type domain is found at Glu160–Pro245.

This sequence belongs to the FKBP-type PPIase family. Tig subfamily.

The protein localises to the cytoplasm. It carries out the reaction [protein]-peptidylproline (omega=180) = [protein]-peptidylproline (omega=0). In terms of biological role, involved in protein export. Acts as a chaperone by maintaining the newly synthesized protein in an open conformation. Functions as a peptidyl-prolyl cis-trans isomerase. In Actinobacillus succinogenes (strain ATCC 55618 / DSM 22257 / CCUG 43843 / 130Z), this protein is Trigger factor.